Here is a 138-residue protein sequence, read N- to C-terminus: ATP synthase epsilon chain (138 aa).

The protein belongs to the ATPase epsilon chain family. In terms of assembly, F-type ATPases have 2 components, CF(1) - the catalytic core - and CF(0) - the membrane proton channel. CF(1) has five subunits: alpha(3), beta(3), gamma(1), delta(1), epsilon(1). CF(0) has three main subunits: a, b and c.

It is found in the cell inner membrane. Its function is as follows. Produces ATP from ADP in the presence of a proton gradient across the membrane. This chain is ATP synthase epsilon chain, found in Cupriavidus necator (strain ATCC 17699 / DSM 428 / KCTC 22496 / NCIMB 10442 / H16 / Stanier 337) (Ralstonia eutropha).